The following is a 936-amino-acid chain: Protocadherin alpha-5 (936 aa).

An N-terminal signal peptide occupies residues 1–28; that stretch reads MVYSRRGSLGSRLLLLWLLLAYWKAGSG. Residues 29-696 lie on the Extracellular side of the membrane; that stretch reads QLHYSIPEEA…GPEAALVDVN (668 aa). Cadherin domains lie at 33–132, 156–241, 242–349, 350–454, 455–564, and 580–677; these read SIPE…PPRF, ASDL…APEF, DKSI…TPEM, AITT…APAF, AQPQ…APAL, and VPRS…APKA. N264 carries an N-linked (GlcNAc...) asparagine glycan. A glycan (N-linked (GlcNAc...) asparagine) is linked at N547. A helical transmembrane segment spans residues 697 to 717; it reads VYLIIAICAVSSLLVLTLLLY. Topologically, residues 718 to 936 are cytoplasmic; it reads TALRCSAQPT…GNSTTDNSDQ (219 aa). Disordered stretches follow at residues 759 to 793 and 816 to 936; these read SGEAPPKTDLMAFSPSLPQGPTSTDNPRQPNPDWR and AGPG…NSDQ. PXXP repeat units follow at residues 773–776, 785–788, 818–821, 873–876, and 877–890; these read PSLP, PRQP, PGGP, KFII, and PGSPAIISIRQEPT. The segment at 773-890 is 5 X 4 AA repeats of P-X-X-P; sequence PSLPQGPTST…AIISIRQEPT (118 aa). Residues 774 to 786 are compositionally biased toward polar residues; sequence SLPQGPTSTDNPR. Residues 895 to 909 show a composition bias toward basic and acidic residues; the sequence is DKSDFITFGKKEETK.

It is found in the cell membrane. Functionally, potential calcium-dependent cell-adhesion protein. May be involved in the establishment and maintenance of specific neuronal connections in the brain. This is Protocadherin alpha-5 (PCDHA5) from Homo sapiens (Human).